A 499-amino-acid polypeptide reads, in one-letter code: Protein-tyrosine sulfotransferase (499 aa).

The Cytoplasmic segment spans residues 1 to 9 (MRLPYRNKK). Residues 10–30 (VTLWVLFGIIVITMFLFKFTE) form a helical; Signal-anchor for type II membrane protein membrane-spanning segment. At 31 to 499 (LRPTCLFKVD…NIMEDPMADT (469 aa)) the chain is on the lumenal side. 80-84 (RSGTT) provides a ligand contact to 3'-phosphoadenylyl sulfate. A disulfide bridge links C98 with C158. E101 (proton donor/acceptor) is an active-site residue. An interaction with peptide substrate region spans residues 103-107 (RVIPR). Residues R185, S193, and R197 each contribute to the 3'-phosphoadenylyl sulfate site. A disulfide bond links C227 and C235. 3'-phosphoadenylyl sulfate-binding positions include Y240, 287-296 (SSDQVIKPVN), and K302. N-linked (GlcNAc...) asparagine glycans are attached at residues N346 and N380. Disordered stretches follow at residues 362-460 (KQVL…QKPK) and 476-499 (NNINNNINNNNNNNNIMEDPMADT). 2 stretches are compositionally biased toward low complexity: residues 375–400 (TNTIINNSNNKDNNNNQYTINKIIPE) and 408–434 (HVQQQHLQQQQQQHLQQQQHQRQQQQQ). Residues 443–460 (EREAEPDREQQLLHQKPK) show a composition bias toward basic and acidic residues. A compositionally biased stretch (low complexity) spans 476-491 (NNINNNINNNNNNNNI).

This sequence belongs to the protein sulfotransferase family.

It is found in the golgi apparatus membrane. The enzyme catalyses L-tyrosyl-[protein] + 3'-phosphoadenylyl sulfate = O-sulfo-L-tyrosine-[protein] + adenosine 3',5'-bisphosphate + H(+). Functionally, catalyzes the O-sulfation of tyrosine residues within acidic motifs of polypeptides. Has a role in protein secretion. In Drosophila melanogaster (Fruit fly), this protein is Protein-tyrosine sulfotransferase.